Here is a 405-residue protein sequence, read N- to C-terminus: MLIVQKYGGTSMGSIERIHNVAQRVLESVTLGHQVVVVVSAMSGETDRLLEFGKNFSHNPNKREMDRIVSVGELVSSAALSMALERYGHRAISLSGKEAGILTSSHFQNAVIQSIDTKRITELLEKNYIVVIAGFQGADIQGETTTLGRGGSDLSAVALAGALKAHLCEIYTDVDGVYTTDPRIEEKAQKIAQISYDEMLELASMGAKVLLNRSVELAKKLSVKLVTRNSFNHSEGTLIVAEKDFKGERMETPIVSGIALDKNQARVSMEGVEDRPGIAAEIFGALAEYRINVDMIVQTIGRDGKTDLDFTIVKTQIEETKQALKPFLAQMDSIDYDENIAKVSIVGVGMKSHSGVASIAFKALAKDNINIMMISTSEIKISVLIDIKYAELAVRTLHAVYQLDQ.

ACT domains lie at 267–344 (VSME…AKVS) and 345–405 (IVGV…QLDQ).

Belongs to the aspartokinase family.

The enzyme catalyses L-aspartate + ATP = 4-phospho-L-aspartate + ADP. Its pathway is amino-acid biosynthesis; L-lysine biosynthesis via DAP pathway; (S)-tetrahydrodipicolinate from L-aspartate: step 1/4. It functions in the pathway amino-acid biosynthesis; L-methionine biosynthesis via de novo pathway; L-homoserine from L-aspartate: step 1/3. It participates in amino-acid biosynthesis; L-threonine biosynthesis; L-threonine from L-aspartate: step 1/5. This is Aspartokinase (lysC) from Helicobacter pylori (strain ATCC 700392 / 26695) (Campylobacter pylori).